Here is a 129-residue protein sequence, read N- to C-terminus: Small ribosomal subunit protein uS12 (129 aa).

D89 carries the post-translational modification 3-methylthioaspartic acid.

This sequence belongs to the universal ribosomal protein uS12 family. In terms of assembly, part of the 30S ribosomal subunit. Contacts proteins S8 and S17. May interact with IF1 in the 30S initiation complex.

Its function is as follows. With S4 and S5 plays an important role in translational accuracy. Interacts with and stabilizes bases of the 16S rRNA that are involved in tRNA selection in the A site and with the mRNA backbone. Located at the interface of the 30S and 50S subunits, it traverses the body of the 30S subunit contacting proteins on the other side and probably holding the rRNA structure together. The combined cluster of proteins S8, S12 and S17 appears to hold together the shoulder and platform of the 30S subunit. The polypeptide is Small ribosomal subunit protein uS12 (Helicobacter hepaticus (strain ATCC 51449 / 3B1)).